The following is a 333-amino-acid chain: Glyceraldehyde-3-phosphate dehydrogenase (333 aa).

S1 carries the N-acetylserine modification. NAD(+)-binding positions include 10 to 11 (RI), D31, and M76. D-glyceraldehyde 3-phosphate contacts are provided by residues 147–149 (SCT), T178, 207–208 (TG), and R230. The Nucleophile role is filled by C148. N312 provides a ligand contact to NAD(+).

It belongs to the glyceraldehyde-3-phosphate dehydrogenase family. Homotetramer.

It is found in the cytoplasm. The catalysed reaction is D-glyceraldehyde 3-phosphate + phosphate + NAD(+) = (2R)-3-phospho-glyceroyl phosphate + NADH + H(+). Its pathway is carbohydrate degradation; glycolysis; pyruvate from D-glyceraldehyde 3-phosphate: step 1/5. The protein is Glyceraldehyde-3-phosphate dehydrogenase of Panulirus versicolor (Painted spiny lobster).